The chain runs to 77 residues: Acyl carrier protein (77 aa).

The Carrier domain occupies 2 to 77 (ADTLSRITKI…DVVEYIEGRQ (76 aa)). Ser37 bears the O-(pantetheine 4'-phosphoryl)serine mark.

It belongs to the acyl carrier protein (ACP) family. Post-translationally, 4'-phosphopantetheine is transferred from CoA to a specific serine of apo-ACP by AcpS. This modification is essential for activity because fatty acids are bound in thioester linkage to the sulfhydryl of the prosthetic group.

The protein resides in the cytoplasm. It functions in the pathway lipid metabolism; fatty acid biosynthesis. In terms of biological role, carrier of the growing fatty acid chain in fatty acid biosynthesis. This is Acyl carrier protein from Halalkalibacterium halodurans (strain ATCC BAA-125 / DSM 18197 / FERM 7344 / JCM 9153 / C-125) (Bacillus halodurans).